We begin with the raw amino-acid sequence, 294 residues long: N-acetylmuramic acid 6-phosphate etherase (294 aa).

An SIS domain is found at 54–217; that stretch reads VIASFRKGGR…STTSMIGVGK (164 aa). Glu-82 serves as the catalytic Proton donor. The active site involves Glu-113.

This sequence belongs to the GCKR-like family. MurNAc-6-P etherase subfamily. Homodimer.

It carries out the reaction N-acetyl-D-muramate 6-phosphate + H2O = N-acetyl-D-glucosamine 6-phosphate + (R)-lactate. Its pathway is amino-sugar metabolism; N-acetylmuramate degradation. In terms of biological role, specifically catalyzes the cleavage of the D-lactyl ether substituent of MurNAc 6-phosphate, producing GlcNAc 6-phosphate and D-lactate. The chain is N-acetylmuramic acid 6-phosphate etherase from Exiguobacterium sp. (strain ATCC BAA-1283 / AT1b).